Consider the following 396-residue polypeptide: Acetate kinase (396 aa).

Asn7 is a Mg(2+) binding site. An ATP-binding site is contributed by Lys14. Arg86 provides a ligand contact to substrate. The Proton donor/acceptor role is filled by Asp143. ATP is bound by residues 203 to 207 (HLGNG), 277 to 279 (DMR), and 325 to 329 (GIGEH). Glu380 provides a ligand contact to Mg(2+).

Belongs to the acetokinase family. In terms of assembly, homodimer. Mg(2+) serves as cofactor. It depends on Mn(2+) as a cofactor.

The protein resides in the cytoplasm. The enzyme catalyses acetate + ATP = acetyl phosphate + ADP. It functions in the pathway metabolic intermediate biosynthesis; acetyl-CoA biosynthesis; acetyl-CoA from acetate: step 1/2. Functionally, catalyzes the formation of acetyl phosphate from acetate and ATP. Can also catalyze the reverse reaction. This chain is Acetate kinase, found in Sulfurovum sp. (strain NBC37-1).